Reading from the N-terminus, the 65-residue chain is Beta-mammal toxin Tma1 (65 aa).

In terms of domain architecture, LCN-type CS-alpha/beta spans 2 to 64 (KEGYLVGNDG…TWNSAKNRCG (63 aa)). 4 cysteine pairs are disulfide-bonded: Cys12/Cys63, Cys16/Cys38, Cys24/Cys44, and Cys28/Cys46.

It belongs to the long (4 C-C) scorpion toxin superfamily. Sodium channel inhibitor family. As to expression, expressed by the venom gland.

Its subcellular location is the secreted. Beta toxins bind voltage-independently at site-4 of sodium channels (Nav) and shift the voltage of activation toward more negative potentials thereby affecting sodium channel activation and promoting spontaneous and repetitive firing. This toxin acts on human Nav1.4/SCN4A and Nav1.6/SCN8A voltage-gated sodium channels. This is Beta-mammal toxin Tma1 from Tityus macrochirus (Scorpion).